The chain runs to 373 residues: Probable protein phosphatase 2C 73 (373 aa).

The 294-residue stretch at 61 to 354 (LASLFSKRGE…DDMSVVCLFL (294 aa)) folds into the PPM-type phosphatase domain. Residues Asp-97, Gly-98, Asp-299, and Asp-345 each coordinate Mn(2+).

It belongs to the PP2C family. Mg(2+) serves as cofactor. Mn(2+) is required as a cofactor.

It carries out the reaction O-phospho-L-seryl-[protein] + H2O = L-seryl-[protein] + phosphate. It catalyses the reaction O-phospho-L-threonyl-[protein] + H2O = L-threonyl-[protein] + phosphate. This is Probable protein phosphatase 2C 73 (PPC6-7) from Arabidopsis thaliana (Mouse-ear cress).